A 208-amino-acid polypeptide reads, in one-letter code: Large ribosomal subunit protein uL3 (208 aa).

The segment at 123–147 (RHGQSRGPMAHGSRYHRRPGSMGPV) is disordered.

The protein belongs to the universal ribosomal protein uL3 family. As to quaternary structure, part of the 50S ribosomal subunit. Forms a cluster with proteins L14 and L19.

Functionally, one of the primary rRNA binding proteins, it binds directly near the 3'-end of the 23S rRNA, where it nucleates assembly of the 50S subunit. In Streptococcus sanguinis (strain SK36), this protein is Large ribosomal subunit protein uL3.